We begin with the raw amino-acid sequence, 41 residues long: Giant hemoglobin AI chain (41 aa).

Residues 2 to 41 enclose the Globin domain; sequence DCGMLQRIKVKQQWASVYSSGIAREDFGEAIWKAVFALAP.

Belongs to the globin family. As to quaternary structure, giant hemoglobin is composed of four heme-containing chains (AI to AIV), and two linker chains (AV and AVI).

This chain is Giant hemoglobin AI chain, found in Lamellibrachia sp. (Deep-sea giant tube worm).